The primary structure comprises 145 residues: Peptidyl-lysine N-acetyltransferase YjaB (145 aa).

Residues 3 to 144 (INIRRSRHEE…KPYPLLNLIY (142 aa)) form the N-acetyltransferase domain.

This sequence belongs to the acetyltransferase family.

The enzyme catalyses L-lysyl-[protein] + acetyl-CoA = N(6)-acetyl-L-lysyl-[protein] + CoA + H(+). Functionally, N-epsilon-lysine acetyltransferase that catalyzes acetylation of a large number of proteins. The polypeptide is Peptidyl-lysine N-acetyltransferase YjaB (yjaB) (Salmonella typhimurium (strain LT2 / SGSC1412 / ATCC 700720)).